The sequence spans 141 residues: Large ribosomal subunit protein uL11 (141 aa).

It belongs to the universal ribosomal protein uL11 family. As to quaternary structure, part of the ribosomal stalk of the 50S ribosomal subunit. Interacts with L10 and the large rRNA to form the base of the stalk. L10 forms an elongated spine to which L12 dimers bind in a sequential fashion forming a multimeric L10(L12)X complex. In terms of processing, one or more lysine residues are methylated.

In terms of biological role, forms part of the ribosomal stalk which helps the ribosome interact with GTP-bound translation factors. The protein is Large ribosomal subunit protein uL11 of Aliarcobacter butzleri (strain RM4018) (Arcobacter butzleri).